A 179-amino-acid polypeptide reads, in one-letter code: Large ribosomal subunit protein uL5 (179 aa).

Belongs to the universal ribosomal protein uL5 family. In terms of assembly, part of the 50S ribosomal subunit; part of the 5S rRNA/L5/L18/L25 subcomplex. Contacts the 5S rRNA and the P site tRNA. Forms a bridge to the 30S subunit in the 70S ribosome.

Functionally, this is one of the proteins that bind and probably mediate the attachment of the 5S RNA into the large ribosomal subunit, where it forms part of the central protuberance. In the 70S ribosome it contacts protein S13 of the 30S subunit (bridge B1b), connecting the 2 subunits; this bridge is implicated in subunit movement. Contacts the P site tRNA; the 5S rRNA and some of its associated proteins might help stabilize positioning of ribosome-bound tRNAs. The sequence is that of Large ribosomal subunit protein uL5 from Rhodospirillum rubrum (strain ATCC 11170 / ATH 1.1.1 / DSM 467 / LMG 4362 / NCIMB 8255 / S1).